A 541-amino-acid chain; its full sequence is Glutamyl-tRNA(Gln) amidotransferase subunit A, chloroplastic/mitochondrial (541 aa).

Active-site charge relay system residues include lysine 121 and serine 196. Residue serine 220 is the Acyl-ester intermediate of the active site.

It belongs to the amidase family. GatA subfamily. Subunit of the heterotrimeric GatCAB amidotransferase (AdT) complex, composed of A, B and C subunits.

The protein localises to the mitochondrion. The protein resides in the plastid. Its subcellular location is the chloroplast stroma. The catalysed reaction is L-glutamyl-tRNA(Gln) + L-glutamine + ATP + H2O = L-glutaminyl-tRNA(Gln) + L-glutamate + ADP + phosphate + H(+). Allows the formation of correctly charged Gln-tRNA(Gln) through the transamidation of misacylated Glu-tRNA(Gln) in chloroplasts and mitochondria. The reaction takes place in the presence of glutamine and ATP through an activated gamma-phospho-Glu-tRNA(Gln). The protein is Glutamyl-tRNA(Gln) amidotransferase subunit A, chloroplastic/mitochondrial of Sorghum bicolor (Sorghum).